The primary structure comprises 655 residues: uncharacterized protein (655 aa).

A helical transmembrane segment spans residues 5–25 (IIIIIFIVINFINIIISSITF). Disordered regions lie at residues 337–363 (NSDYNNNNNNNNNNNNNNNNNNNNNNN) and 484–525 (DKIG…SDNS). Positions 515–524 (DNNSIGSSDN) are enriched in low complexity. A helical membrane pass occupies residues 588–608 (ILAVTISAIGIICVALLLTVV).

The protein localises to the membrane. This is an uncharacterized protein from Dictyostelium discoideum (Social amoeba).